The primary structure comprises 435 residues: Eukaryotic translation initiation factor 3 subunit E (435 aa).

The PCI domain occupies T241 to Q409.

It belongs to the eIF-3 subunit E family. Component of the eukaryotic translation initiation factor 3 (eIF-3) complex.

The protein localises to the cytoplasm. Component of the eukaryotic translation initiation factor 3 (eIF-3) complex, which is involved in protein synthesis of a specialized repertoire of mRNAs and, together with other initiation factors, stimulates binding of mRNA and methionyl-tRNAi to the 40S ribosome. The eIF-3 complex specifically targets and initiates translation of a subset of mRNAs involved in cell proliferation. This is Eukaryotic translation initiation factor 3 subunit E from Phaeosphaeria nodorum (strain SN15 / ATCC MYA-4574 / FGSC 10173) (Glume blotch fungus).